A 340-amino-acid chain; its full sequence is MGKDYYQTLGLARGASDEEIKRAYRRQALRYHPDKNKEPGAEEKFKEIAEAYDVLSDPRKREIFDRYGEEGLKGSGPSGGSSGGTNGTSFSYTFHGDPHAMFAEFFGGRNPFDNFFGQRNGEEGMDIDDPFSGFPMGMGGFTNMNFGRSRPAQEPTRKKQDPPVTHDLRVSLEEIYSGCTKKMKISHKRLNPDGKSIRNEDKILTIEVKRGWKEGTKITFPKEGDQTSNNIPADIVFVLKDKPHNIFKRDGSDVIYPARISLREALCGCTVNVPTLDGRTIPVVFKDVIRPGMRRKVPGEGLPLPKTPEKRGDLIIEFEVIFPERIPQTSRTVLEQVLPI.

The region spanning 2-70 (GKDYYQTLGL…REIFDRYGEE (69 aa)) is the J domain. Residues 68–90 (GEEGLKGSGPSGGSSGGTNGTSF) form a disordered region. Residues 73–86 (KGSGPSGGSSGGTN) show a composition bias toward gly residues. Position 307 is a phosphothreonine (Thr-307).

In terms of assembly, interacts with DNAJC3. Interacts with HSF1 (via transactivation domain); this interaction results in the inhibition of heat shock- and HSF1-induced transcriptional activity during the attenuation and recovery phase period of the heat shock response. Interacts with BAG3.

It is found in the cytoplasm. It localises to the nucleus. The protein localises to the nucleolus. Functionally, interacts with HSP70 and can stimulate its ATPase activity. Stimulates the association between HSC70 and HIP. Negatively regulates heat shock-induced HSF1 transcriptional activity during the attenuation and recovery phase period of the heat shock response. Stimulates ATP hydrolysis and the folding of unfolded proteins mediated by HSPA1A/B (in vitro). This is DnaJ homolog subfamily B member 1 (DNAJB1) from Bos taurus (Bovine).